We begin with the raw amino-acid sequence, 238 residues long: Succinate dehydrogenase iron-sulfur subunit (238 aa).

The 2Fe-2S ferredoxin-type domain maps to 8–97 (YRYNPDVDDA…KIVIRPLPGL (90 aa)). [2Fe-2S] cluster-binding residues include Cys-55, Cys-60, and Cys-75. The 4Fe-4S ferredoxin-type domain maps to 139 to 169 (QREKLDGLYECILCACCSTSCPSFWWNPDKF). Cys-149, Cys-152, and Cys-155 together coordinate [4Fe-4S] cluster. A [3Fe-4S] cluster-binding site is contributed by Cys-159. Trp-164 contributes to the a ubiquinone binding site. Positions 206 and 212 each coordinate [3Fe-4S] cluster. Cys-216 lines the [4Fe-4S] cluster pocket.

It belongs to the succinate dehydrogenase/fumarate reductase iron-sulfur protein family. Part of an enzyme complex containing four subunits: a flavoprotein, an iron-sulfur, cytochrome b-556, and a hydrophobic anchor protein. The complex forms trimers. [2Fe-2S] cluster is required as a cofactor. The cofactor is [3Fe-4S] cluster. [4Fe-4S] cluster serves as cofactor.

It is found in the cell inner membrane. It carries out the reaction a quinone + succinate = fumarate + a quinol. The protein operates within carbohydrate metabolism; tricarboxylic acid cycle; fumarate from succinate (bacterial route): step 1/1. Its function is as follows. Two distinct, membrane-bound, FAD-containing enzymes are responsible for the catalysis of fumarate and succinate interconversion; the fumarate reductase is used in anaerobic growth, and the succinate dehydrogenase is used in aerobic growth. The sequence is that of Succinate dehydrogenase iron-sulfur subunit (sdhB) from Escherichia coli (strain K12).